Here is a 210-residue protein sequence, read N- to C-terminus: Glutathione S-transferase P 2 (210 aa).

In terms of domain architecture, GST N-terminal spans 1-82 (SGYTLTYFPL…LLARYGLSGS (82 aa)). Glutathione is bound by residues tyrosine 7, arginine 13, tryptophan 38, lysine 46, 53-54 (QI), and 66-67 (QS). Residues 83 to 204 (NEREIAINEM…KSEGRKRRPI (122 aa)) form the GST C-terminal domain.

Belongs to the GST superfamily. Pi family. As to quaternary structure, homodimer. In terms of tissue distribution, liver, kidney, muscle, skin, lung and ovary.

The catalysed reaction is RX + glutathione = an S-substituted glutathione + a halide anion + H(+). Conjugation of reduced glutathione to a wide number of exogenous and endogenous hydrophobic electrophiles. In Bufo bufo (European toad), this protein is Glutathione S-transferase P 2.